A 95-amino-acid polypeptide reads, in one-letter code: Protein TusB (95 aa).

It belongs to the DsrH/TusB family. As to quaternary structure, heterohexamer, formed by a dimer of trimers. The hexameric TusBCD complex contains 2 copies each of TusB, TusC and TusD. The TusBCD complex interacts with TusE.

The protein localises to the cytoplasm. Its function is as follows. Part of a sulfur-relay system required for 2-thiolation of 5-methylaminomethyl-2-thiouridine (mnm(5)s(2)U) at tRNA wobble positions. In Buchnera aphidicola subsp. Baizongia pistaciae (strain Bp), this protein is Protein TusB.